Reading from the N-terminus, the 330-residue chain is MAEEACQVRRMKLGSQGLEVSAQGLGCMGLSDFYGAPTPETNAVALLRHAINAGVTFLDTSDIYGPETNELLLGKALKDGLRDKVELATKFGITASEDGKFGFRGDPEYVRIACEASLKRLGVTCIDLYYQHRIDTTLPIEITIGELKKLVEEGKIKYIGLSEASASTIRRAHAVHPITAVQIEWSLWSRDVEEDIIPTCRELGIGIVAYSPLGRGFLGLPRFQQENLENNKILYEKVQAMATKKSCTPAQLALAWVHHQGDDVCPIPGTSKIQNLNQNIGALSVKLTPEEMVELEAIAQPDFVKGERYDNNMVTYKDSETPPLSSWKAR.

Tyrosine 64 (proton donor) is an active-site residue. Residue histidine 132 coordinates substrate. 211–221 (SPLGRGFLGLP) is a binding site for NADP(+).

The protein belongs to the aldo/keto reductase family.

This is Probable aldo-keto reductase 6 from Arabidopsis thaliana (Mouse-ear cress).